A 134-amino-acid chain; its full sequence is Profilin-2 (134 aa).

Cysteines 13 and 118 form a disulfide. The short motif at 84–100 (AVIRGKKGSGGITIKKT) is the Involved in PIP2 interaction element. Thr114 is modified (phosphothreonine).

This sequence belongs to the profilin family. As to quaternary structure, occurs in many kinds of cells as a complex with monomeric actin in a 1:1 ratio. In terms of processing, phosphorylated by MAP kinases.

It localises to the cytoplasm. The protein resides in the cytoskeleton. Functionally, binds to actin and affects the structure of the cytoskeleton. At high concentrations, profilin prevents the polymerization of actin, whereas it enhances it at low concentrations. This chain is Profilin-2, found in Olea europaea (Common olive).